Reading from the N-terminus, the 394-residue chain is Phosphoglycerate kinase (394 aa).

Substrate contacts are provided by residues 21–23 (DFN), arginine 36, 59–62 (HLGR), arginine 118, and arginine 151. Serine 183 is modified (phosphoserine). Lysine 201 lines the ATP pocket. Threonine 299 is modified (phosphothreonine). Residues glutamate 323 and 350-353 (GGDS) each bind ATP.

Belongs to the phosphoglycerate kinase family. In terms of assembly, monomer.

The protein localises to the cytoplasm. The enzyme catalyses (2R)-3-phosphoglycerate + ATP = (2R)-3-phospho-glyceroyl phosphate + ADP. The protein operates within carbohydrate degradation; glycolysis; pyruvate from D-glyceraldehyde 3-phosphate: step 2/5. The sequence is that of Phosphoglycerate kinase (pgk) from Bacillus subtilis (strain 168).